Consider the following 410-residue polypeptide: Elongation factor Tu, chloroplastic (410 aa).

The tr-type G domain occupies 10–215 (KPHINIGTIG…MVDKYFPTPE (206 aa)). The G1 stretch occupies residues 19 to 26 (GHVDHGKT). 19 to 26 (GHVDHGKT) provides a ligand contact to GTP. T26 is a binding site for Mg(2+). Residues 61-65 (GITIN) form a G2 region. The tract at residues 82–85 (DCPG) is G3. GTP contacts are provided by residues 82–86 (DCPGH) and 137–140 (NKAD). Positions 137 to 140 (NKAD) are G4. The G5 stretch occupies residues 175-177 (SAL).

This sequence belongs to the TRAFAC class translation factor GTPase superfamily. Classic translation factor GTPase family. EF-Tu/EF-1A subfamily.

The protein resides in the plastid. It is found in the chloroplast. The catalysed reaction is GTP + H2O = GDP + phosphate + H(+). GTP hydrolase that promotes the GTP-dependent binding of aminoacyl-tRNA to the A-site of ribosomes during protein biosynthesis. The polypeptide is Elongation factor Tu, chloroplastic (tufA) (Cyanidium caldarium (Red alga)).